Here is a 191-residue protein sequence, read N- to C-terminus: Protein DMP10 (191 aa).

A run of 4 helical transmembrane segments spans residues 15–35, 48–68, 114–134, and 158–178; these read FANL…PSFS, LLTI…SFTD, LSFV…ALAV, and LMIK…FAIF.

The protein belongs to the plant DMP1 protein family. As to expression, restricted to flowers.

The protein localises to the membrane. Involved in membrane remodeling. The polypeptide is Protein DMP10 (Arabidopsis thaliana (Mouse-ear cress)).